Consider the following 403-residue polypeptide: TBC1 domain family member 20 (403 aa).

Residues Met-1–Arg-29 are disordered. The span at Gly-18–Ala-27 shows a compositional bias: basic and acidic residues. Residues Leu-60–His-246 form the Rab-GAP TBC domain. Transmembrane regions (helical) follow at residues Leu-238–Val-258 and Phe-367–Val-387.

Its subcellular location is the membrane. GTPase-activating protein (GAP) specific for Rab1 and Rab2 small GTPase families for which it can accelerate the intrinsic GTP hydrolysis rate by more than five orders of magnitude. Also shows GAP activity for RAB18 GTPase. Promotes RAB18 dissociation from the endoplasmic reticulum (ER) membrane into the cytosol, probably through stimulating RAB18 GTP-hydrolysis. Involved in maintaining endoplasmic reticulum structure. The polypeptide is TBC1 domain family member 20 (TBC1D20) (Bos taurus (Bovine)).